A 376-amino-acid polypeptide reads, in one-letter code: TraB domain-containing protein (376 aa).

Met-1 bears the N-acetylmethionine mark. Thr-64 carries the phosphothreonine modification.

This is TraB domain-containing protein (Trabd) from Mus musculus (Mouse).